The sequence spans 276 residues: NAD kinase (276 aa).

The Proton acceptor role is filled by D68. NAD(+) is bound by residues 68-69, R73, 138-139, K149, D168, 179-184, and Q237; these read DG, NE, and TAYSLS.

Belongs to the NAD kinase family. The cofactor is a divalent metal cation.

The protein localises to the cytoplasm. The catalysed reaction is NAD(+) + ATP = ADP + NADP(+) + H(+). Functionally, involved in the regulation of the intracellular balance of NAD and NADP, and is a key enzyme in the biosynthesis of NADP. Catalyzes specifically the phosphorylation on 2'-hydroxyl of the adenosine moiety of NAD to yield NADP. The sequence is that of NAD kinase from Methanopyrus kandleri (strain AV19 / DSM 6324 / JCM 9639 / NBRC 100938).